A 592-amino-acid polypeptide reads, in one-letter code: Bifunctional purine biosynthesis protein ADE17 (592 aa).

The region spanning 1-147 is the MGS-like domain; the sequence is MANYTKTAIL…KNHARVTILS (147 aa). IMP-binding positions include 35–38, 65–68, 102–103, and 126–127; these read SGGT, RVKT, CN, and DI. Lys-138 acts as the Proton donor/acceptor; for FAICAR cyclization activity in catalysis. Residues 206 to 207, His-267, Gly-315, Asp-338, Asn-430, and Arg-450 each bind 5-amino-1-(5-phospho-beta-D-ribosyl)imidazole-4-carboxamide; that span reads RY. The Proton acceptor; for AICAR formyltransferase activity role is filled by His-267. Residue Ile-451 coordinates (6R)-10-formyltetrahydrofolate. Phe-541 contacts 5-amino-1-(5-phospho-beta-D-ribosyl)imidazole-4-carboxamide. Residues Asp-546 and 565–566 each bind (6R)-10-formyltetrahydrofolate; that span reads SV. Arg-588 is a binding site for 5-amino-1-(5-phospho-beta-D-ribosyl)imidazole-4-carboxamide.

The protein belongs to the PurH family. In terms of assembly, homodimer.

It is found in the cytoplasm. Its subcellular location is the cytosol. It catalyses the reaction (6R)-10-formyltetrahydrofolate + 5-amino-1-(5-phospho-beta-D-ribosyl)imidazole-4-carboxamide = 5-formamido-1-(5-phospho-D-ribosyl)imidazole-4-carboxamide + (6S)-5,6,7,8-tetrahydrofolate. The catalysed reaction is IMP + H2O = 5-formamido-1-(5-phospho-D-ribosyl)imidazole-4-carboxamide. Its pathway is purine metabolism; IMP biosynthesis via de novo pathway; 5-formamido-1-(5-phospho-D-ribosyl)imidazole-4-carboxamide from 5-amino-1-(5-phospho-D-ribosyl)imidazole-4-carboxamide (10-formyl THF route): step 1/1. The protein operates within purine metabolism; IMP biosynthesis via de novo pathway; IMP from 5-formamido-1-(5-phospho-D-ribosyl)imidazole-4-carboxamide: step 1/1. In terms of biological role, bifunctional enzyme that catalyzes the last two steps of purine biosynthesis. Acts as a transformylase that incorporates a formyl group to the AMP analog AICAR (5-amino-1-(5-phospho-beta-D-ribosyl)imidazole-4-carboxamide) to produce the intermediate formyl-AICAR (FAICAR). Also catalyzes the cyclization of FAICAR to IMP. This chain is Bifunctional purine biosynthesis protein ADE17, found in Saccharomyces cerevisiae (strain ATCC 204508 / S288c) (Baker's yeast).